A 144-amino-acid polypeptide reads, in one-letter code: Glycine-rich protein HC1 (144 aa).

Residues 5–25 (IFLLLGLSIAFAILISSEVAA) form a helical membrane-spanning segment. Repeat copies occupy residues 37-42 (GYNNGG), 43-48 (GYHNGG), 50-55 (GYNNGG), 56-61 (GYHNGG), 63-68 (GYNNGG), 69-74 (GYHNGG), 76-81 (GYNNGG), 82-87 (GYHNGG), 89-94 (GYNNGG), 102-107 (GYNNGG), and 108-113 (GYHGGG). The segment at 37–113 (GYNNGGGYHN…NNGGGYHGGG (77 aa)) is 11 X 6 AA tandem repeats of G-Y-[NH]-N-G -G.

This sequence belongs to the GRP family.

The protein resides in the membrane. The protein is Glycine-rich protein HC1 of Oxybasis rubra (Red goosefoot).